We begin with the raw amino-acid sequence, 90 residues long: DNA-binding protein HU-beta (90 aa).

Belongs to the bacterial histone-like protein family. As to quaternary structure, heterodimer of an alpha and a beta chain.

Its function is as follows. Histone-like DNA-binding protein which is capable of wrapping DNA to stabilize it, and thus to prevent its denaturation under extreme environmental conditions. The protein is DNA-binding protein HU-beta (hupB) of Pseudomonas fluorescens (strain ATCC BAA-477 / NRRL B-23932 / Pf-5).